A 436-amino-acid polypeptide reads, in one-letter code: UDP-N-acetylmuramate--L-alanine ligase (436 aa).

111 to 117 (GTHGKTS) serves as a coordination point for ATP.

Belongs to the MurCDEF family.

The protein localises to the cytoplasm. It catalyses the reaction UDP-N-acetyl-alpha-D-muramate + L-alanine + ATP = UDP-N-acetyl-alpha-D-muramoyl-L-alanine + ADP + phosphate + H(+). The protein operates within cell wall biogenesis; peptidoglycan biosynthesis. Cell wall formation. This is UDP-N-acetylmuramate--L-alanine ligase from Pediococcus pentosaceus (strain ATCC 25745 / CCUG 21536 / LMG 10740 / 183-1w).